The chain runs to 240 residues: UPF0173 metal-dependent hydrolase OE_2513F (240 aa).

The protein belongs to the UPF0173 family.

The protein is UPF0173 metal-dependent hydrolase OE_2513F of Halobacterium salinarum (strain ATCC 29341 / DSM 671 / R1).